The primary structure comprises 244 residues: Ribonuclease 3 (244 aa).

Positions 17 to 146 (FEKKMQELNL…FVGALYLDQG (130 aa)) constitute an RNase III domain. Residue E59 participates in Mg(2+) binding. D63 is a catalytic residue. 2 residues coordinate Mg(2+): D132 and E135. The active site involves E135. The 70-residue stretch at 172-241 (DFKTQFQEYV…AERAYKILKN (70 aa)) folds into the DRBM domain.

Belongs to the ribonuclease III family. Homodimer. The cofactor is Mg(2+).

Its subcellular location is the cytoplasm. It catalyses the reaction Endonucleolytic cleavage to 5'-phosphomonoester.. Its function is as follows. Digests double-stranded RNA. Involved in the processing of primary rRNA transcript to yield the immediate precursors to the large and small rRNAs (23S and 16S). Processes some mRNAs, and tRNAs when they are encoded in the rRNA operon. Processes pre-crRNA and tracrRNA of type II CRISPR loci if present in the organism. The sequence is that of Ribonuclease 3 from Staphylococcus saprophyticus subsp. saprophyticus (strain ATCC 15305 / DSM 20229 / NCIMB 8711 / NCTC 7292 / S-41).